A 130-amino-acid polypeptide reads, in one-letter code: Glycine cleavage system H protein (130 aa).

The Lipoyl-binding domain occupies 24–106 (GIKVGISAFA…YQEGWLLKIT (83 aa)). Residue Lys65 is modified to N6-lipoyllysine.

This sequence belongs to the GcvH family. The glycine cleavage system is composed of four proteins: P, T, L and H. The cofactor is (R)-lipoate.

The glycine cleavage system catalyzes the degradation of glycine. The H protein shuttles the methylamine group of glycine from the P protein to the T protein. In Synechococcus sp. (strain RCC307), this protein is Glycine cleavage system H protein.